The sequence spans 361 residues: Protein RecA (361 aa).

77–84 lines the ATP pocket; it reads GPESSGKT.

This sequence belongs to the RecA family.

The protein localises to the cytoplasm. Functionally, can catalyze the hydrolysis of ATP in the presence of single-stranded DNA, the ATP-dependent uptake of single-stranded DNA by duplex DNA, and the ATP-dependent hybridization of homologous single-stranded DNAs. It interacts with LexA causing its activation and leading to its autocatalytic cleavage. The polypeptide is Protein RecA (Brucella anthropi (strain ATCC 49188 / DSM 6882 / CCUG 24695 / JCM 21032 / LMG 3331 / NBRC 15819 / NCTC 12168 / Alc 37) (Ochrobactrum anthropi)).